Here is a 260-residue protein sequence, read N- to C-terminus: Purine nucleoside phosphorylase XF_0940 (260 aa).

Zn(2+) contacts are provided by H79, C120, and H137.

It belongs to the purine nucleoside phosphorylase YfiH/LACC1 family. In terms of assembly, homodimer. Cu(2+) is required as a cofactor. Zn(2+) serves as cofactor.

It catalyses the reaction adenosine + phosphate = alpha-D-ribose 1-phosphate + adenine. It carries out the reaction S-methyl-5'-thioadenosine + phosphate = 5-(methylsulfanyl)-alpha-D-ribose 1-phosphate + adenine. The enzyme catalyses inosine + phosphate = alpha-D-ribose 1-phosphate + hypoxanthine. The catalysed reaction is adenosine + H2O + H(+) = inosine + NH4(+). Functionally, purine nucleoside enzyme that catalyzes the phosphorolysis of adenosine and inosine nucleosides, yielding D-ribose 1-phosphate and the respective free bases, adenine and hypoxanthine. Also catalyzes the phosphorolysis of S-methyl-5'-thioadenosine into adenine and S-methyl-5-thio-alpha-D-ribose 1-phosphate. Also has adenosine deaminase activity. The chain is Purine nucleoside phosphorylase XF_0940 from Xylella fastidiosa (strain 9a5c).